Consider the following 439-residue polypeptide: Telomeric repeat-binding factor 1 (439 aa).

A disordered region spans residues 1–36 (MAEDVSSAAPSPRGCADGRDADPTEEQMAETERNDE). At alanine 2 the chain carries N-acetylalanine. A Phosphoserine modification is found at serine 11. Acidic residues predominate over residues 23–36 (PTEEQMAETERNDE). Positions 58–268 (EEEEEDAGLV…AAAKVVESKR (211 aa)) are TRFH mediates dimerization. Residue lysine 213 forms a Glycyl lysine isopeptide (Lys-Gly) (interchain with G-Cter in SUMO2) linkage. Serine 219 carries the post-translational modification Phosphoserine; by ATM. The interaction with RLIM stretch occupies residues 265–378 (ESKRTRTITS…PVTPEKHRAR (114 aa)). The interval 266 to 311 (SKRTRTITSQDKPSGNDVEMETEANLDTRKSVSDKQSAVTESSEGT) is disordered. A compositionally biased stretch (polar residues) spans 299–311 (DKQSAVTESSEGT). A Glycyl lysine isopeptide (Lys-Gly) (interchain with G-Cter in SUMO2) cross-link involves residue lysine 325. A disordered region spans residues 326–375 (LQHGTQQQDLNKKERRVGTPQSTKKKKESRRATESRIPVSKSQPVTPEKH). Positions 337–356 (KKERRVGTPQSTKKKKESRR) match the Nuclear localization signal motif. Lysine 366 participates in a covalent cross-link: Glycyl lysine isopeptide (Lys-Gly) (interchain with G-Cter in SUMO2). Positions 375 to 432 (HRARKRQAWLWEEDKNLRSGVRKYGEGNWSKILLHYKFNNRTSVMLKDRWRTMKKLKL) constitute an HTH myb-type domain. Residues 403–428 (WSKILLHYKFNNRTSVMLKDRWRTMK) constitute a DNA-binding region (H-T-H motif).

As to quaternary structure, homodimer; can contain both isoforms. Found in a complex with POT1; TINF2 and TNKS1. Interacts with ATM, TINF2, TNKS1, TNKS2, PINX1, NEK2 and MAPRE1. Component of the shelterin complex (telosome) composed of TERF1, TERF2, TINF2, TERF2IP ACD and POT1. Interacts with RLIM (via N-terminus). Interacts with FBXO4. Interaction with TINF2 protects against interaction with FBXO4 and subsequent polyubiquitination and proteasomal degradation. Interacts with GNL3L; this interaction promotes homodimerization. Interacts with TIN2. Interacts with RTEL1. Interactions with GNL3L and TIN2 are mutually exclusive. Interacts with CCDC79/TERB1. Interacts with TRIOBP isoform 1; mediates TERF1 localization to the centrosome. In terms of processing, phosphorylated preferentially on Ser-219 in an ATM-dependent manner in response to ionizing DNA damage. ADP-ribosylation by TNKS1 or TNKS2 diminishes its ability to bind to telomeric DNA. Post-translationally, ubiquitinated by RLIM/RNF12, leading to its degradation by the proteasome. Ubiquitinated by a SCF (SKP1-CUL1-F-box protein) ubiquitin-protein ligase complex, leading to its degradation by the proteasome. Highly expressed and ubiquitous. Isoform Pin2 predominates.

The protein localises to the nucleus. Its subcellular location is the cytoplasm. It localises to the cytoskeleton. The protein resides in the spindle. It is found in the chromosome. The protein localises to the telomere. Binds the telomeric double-stranded 5'-TTAGGG-3' repeat and negatively regulates telomere length. Involved in the regulation of the mitotic spindle. Component of the shelterin complex (telosome) that is involved in the regulation of telomere length and protection. Shelterin associates with arrays of double-stranded 5'-TTAGGG-3' repeats added by telomerase and protects chromosome ends; without its protective activity, telomeres are no longer hidden from the DNA damage surveillance and chromosome ends are inappropriately processed by DNA repair pathways. The sequence is that of Telomeric repeat-binding factor 1 (TERF1) from Homo sapiens (Human).